A 143-amino-acid polypeptide reads, in one-letter code: Hemoglobin subunit alpha (143 aa).

Ser2 is modified (N-acetylserine). The region spanning 2 to 143 is the Globin domain; that stretch reads SLSDTDKAVV…LALALSEKYR (142 aa). His60 provides a ligand contact to O2. His89 contacts heme b.

Belongs to the globin family. Heterotetramer of two alpha chains and two beta chains. Red blood cells.

In terms of biological role, involved in oxygen transport from gills to the various peripheral tissues. This chain is Hemoglobin subunit alpha (hbaa1), found in Danio rerio (Zebrafish).